The following is a 361-amino-acid chain: Anthranilate phosphoribosyltransferase (361 aa).

Residues glycine 80, 83 to 84, threonine 88, 90 to 93, 108 to 116, and serine 120 each bind 5-phospho-alpha-D-ribose 1-diphosphate; these read GD, NVST, and KHGNYSVSS. Glycine 80 contacts anthranilate. Serine 92 is a Mg(2+) binding site. Asparagine 111 lines the anthranilate pocket. Arginine 166 is an anthranilate binding site. Mg(2+) contacts are provided by aspartate 224 and glutamate 225. The disordered stretch occupies residues 338–361; that stretch reads EGDGEAASTDSAAASTTAGPEDDD. A compositionally biased stretch (low complexity) spans 343–355; the sequence is AASTDSAAASTTA.

This sequence belongs to the anthranilate phosphoribosyltransferase family. As to quaternary structure, homodimer. Mg(2+) is required as a cofactor.

It catalyses the reaction N-(5-phospho-beta-D-ribosyl)anthranilate + diphosphate = 5-phospho-alpha-D-ribose 1-diphosphate + anthranilate. It participates in amino-acid biosynthesis; L-tryptophan biosynthesis; L-tryptophan from chorismate: step 2/5. Functionally, catalyzes the transfer of the phosphoribosyl group of 5-phosphorylribose-1-pyrophosphate (PRPP) to anthranilate to yield N-(5'-phosphoribosyl)-anthranilate (PRA). This chain is Anthranilate phosphoribosyltransferase, found in Halorubrum lacusprofundi (strain ATCC 49239 / DSM 5036 / JCM 8891 / ACAM 34).